Consider the following 115-residue polypeptide: U3-lycotoxin-Ls1a (115 aa).

The N-terminal stretch at 1-20 (MKFVLLFGVLLLTLFSYSSA) is a signal peptide. The propeptide occupies 21-44 (EMLDDFDQADEDELLSLIEKEEAR). Intrachain disulfides connect cysteine 48/cysteine 63, cysteine 55/cysteine 72, cysteine 62/cysteine 87, and cysteine 74/cysteine 85.

It belongs to the neurotoxin 19 (CSTX) family. 01 subfamily. As to expression, expressed by the venom gland.

Its subcellular location is the secreted. This is U3-lycotoxin-Ls1a from Lycosa singoriensis (Wolf spider).